A 77-amino-acid polypeptide reads, in one-letter code: UPF0349 protein lwe2340 (77 aa).

Belongs to the UPF0349 family.

This Listeria welshimeri serovar 6b (strain ATCC 35897 / DSM 20650 / CCUG 15529 / CIP 8149 / NCTC 11857 / SLCC 5334 / V8) protein is UPF0349 protein lwe2340.